The sequence spans 916 residues: Protein O-GlcNAcase (916 aa).

A disordered region spans residues 1–50; sequence MVQKESQAALEERESERNANPASVSGASLEPSAAPAPGEDNPSGAGAAAG. The 277-residue stretch at 60 to 336 folds into the GH84 domain; that stretch reads FLCGVVEGFY…TLATWYKSNM (277 aa). A protein-binding residues include Gly-67, Lys-98, and Asp-174. The Proton donor role is filled by Asp-175. Residues Tyr-219, 278–280, Asp-285, and Asn-313 contribute to the a protein site; that span reads WDN. The residue at position 364 (Ser-364) is a Phosphoserine. Residues 440-480 are disordered; sequence QGAALSGEPSALTKEEEKKQPDEEPMDMVVEKQEESEHKSD. Composition is skewed to basic and acidic residues over residues 452–461 and 468–480; these read TKEEEKKQPD and VVEK…HKSD.

Belongs to the glycosyl hydrolase 84 family. In terms of assembly, monomer. Interacts with CLOCK. In terms of processing, proteolytically cleaved by caspase-3 during apoptosis. The fragments interact with each other; cleavage does not decrease enzyme activity. In terms of tissue distribution, detected in spleen (at protein level). Ubiquitous. Expressed at highest levels in the brain and spleen.

The protein resides in the nucleus. It is found in the cytoplasm. It carries out the reaction 3-O-(N-acetyl-beta-D-glucosaminyl)-L-seryl-[protein] + H2O = N-acetyl-D-glucosamine + L-seryl-[protein]. The enzyme catalyses 3-O-(N-acetyl-beta-D-glucosaminyl)-L-threonyl-[protein] + H2O = L-threonyl-[protein] + N-acetyl-D-glucosamine. Its activity is regulated as follows. Inhibited by Cu(2+), Hg(2+), Cd(2+) and Zn(2+) at 1 mM. Not inhibited by Co(2+), Mg(2+), Ca(2+), Mn(2+), Fe(3+) and EDTA. Also inhibited by sodium chloride at 1M and 2-amino-2-hydroxymethyl-1,3-propanediol (trishydroxymethylaminomethane) at 75 mM. Cleaves GlcNAc but not GalNAc from O-glycosylated proteins. Deglycosylates a large and diverse number of proteins, such as CRYAB, ELK1, GSDMD, LMNB1 and TAB1. Can use p-nitrophenyl-beta-GlcNAc and 4-methylumbelliferone-GlcNAc as substrates but not p-nitrophenyl-beta-GalNAc or p-nitrophenyl-alpha-GlcNAc (in vitro). Does not bind acetyl-CoA and does not have histone acetyltransferase activity. Its function is as follows. Lacks enzyme activity. The protein is Protein O-GlcNAcase of Rattus norvegicus (Rat).